We begin with the raw amino-acid sequence, 145 residues long: Cell division protein SepF (145 aa).

Residues 23-41 (PQEVSKTKDENAKPKHETP) show a composition bias toward basic and acidic residues. The segment at 23-42 (PQEVSKTKDENAKPKHETPK) is disordered.

This sequence belongs to the SepF family. As to quaternary structure, homodimer. Interacts with FtsZ.

It localises to the cytoplasm. In terms of biological role, cell division protein that is part of the divisome complex and is recruited early to the Z-ring. Probably stimulates Z-ring formation, perhaps through the cross-linking of FtsZ protofilaments. Its function overlaps with FtsA. The protein is Cell division protein SepF of Caldicellulosiruptor bescii (strain ATCC BAA-1888 / DSM 6725 / KCTC 15123 / Z-1320) (Anaerocellum thermophilum).